Consider the following 238-residue polypeptide: uncharacterized protein (238 aa).

This is an uncharacterized protein from Frog virus 3 (isolate Goorha) (FV-3).